Consider the following 515-residue polypeptide: UDP-glucosyltransferase 2 (515 aa).

The first 20 residues, 1–20, serve as a signal peptide directing secretion; it reads MEFRLLILALFSVLMSTSNG. Topologically, residues 21–471 are lumenal; that stretch reads AEILALFPIH…TAGAFLHWYQ (451 aa). N-linked (GlcNAc...) asparagine glycans are attached at residues N51, N236, and N303. Residues 472–492 form a helical membrane-spanning segment; that stretch reads YLLLDVITFLLVTFCAFCFIV. The Cytoplasmic portion of the chain corresponds to 493–515; sequence KYICKALIHHYWSSSKSEKLKKN.

Belongs to the UDP-glycosyltransferase family. Post-translationally, glycosylated.

The protein resides in the endoplasmic reticulum membrane. It catalyses the reaction kermesate + UDP-alpha-D-glucose = carminate + UDP + 2 H(+). The catalysed reaction is flavokermesate + UDP-alpha-D-glucose = flavokermesate 7-C-beta-D-glucoside + UDP + 2 H(+). Membrane-bound UDP-glucosyltransferase (UGT) which catalyzes the C-glucosylation of kermesate and flavokermesate to produce carminate and flavokermesate 7-C-beta-D-glucoside (dcll) respectively. Carminate is used as a deterrent against insect predators. The chain is UDP-glucosyltransferase 2 from Dactylopius coccus (Cochineal).